Here is a 452-residue protein sequence, read N- to C-terminus: Elongation factor Tu, mitochondrial (452 aa).

The N-terminal 43 residues, 1-43, are a transit peptide targeting the mitochondrion; the sequence is MAAATLLRATPLFSGLGAGPAPLLQGLLRPLKAQALPVLCRGL. One can recognise a tr-type G domain in the interval 55 to 251; sequence KPHVNVGTIG…AVDTYIPVPT (197 aa). The interval 64–71 is G1; the sequence is GHVDHGKT. Aspartate 67, glycine 69, lysine 70, threonine 71, and threonine 72 together coordinate GTP. Residue threonine 71 participates in Mg(2+) binding. An N6-acetyllysine modification is found at lysine 79. Lysine 88 carries the post-translational modification N6-acetyllysine; alternate. Lysine 88 is modified (N6-succinyllysine; alternate). The segment at 105–109 is G2; sequence GITIN. The tract at residues 126 to 129 is G3; sequence DCPG. Residues asparagine 181, aspartate 184, serine 219, alanine 220, and leucine 221 each contribute to the GTP site. Positions 181–184 are G4; the sequence is NKAD. The G5 stretch occupies residues 219 to 221; the sequence is SAL. Lysine 234 carries the post-translational modification N6-succinyllysine. N6-acetyllysine is present on lysine 256. Threonine 278 carries the post-translational modification Phosphothreonine. Lysine 286 carries the N6-succinyllysine modification. Serine 312 is modified (phosphoserine). N6-acetyllysine is present on residues lysine 361 and lysine 418.

This sequence belongs to the TRAFAC class translation factor GTPase superfamily. Classic translation factor GTPase family. EF-Tu/EF-1A subfamily. Interacts with NLRX1. Interacts with ATG16L1.

The protein localises to the mitochondrion. It carries out the reaction GTP + H2O = GDP + phosphate + H(+). GTP hydrolase that promotes the GTP-dependent binding of aminoacyl-tRNA to the A-site of ribosomes during protein biosynthesis. Also plays a role in the regulation of autophagy and innate immunity. Recruits ATG5-ATG12 and NLRX1 at mitochondria and serves as a checkpoint of the RIGI-MAVS pathway. In turn, inhibits RLR-mediated type I interferon while promoting autophagy. In Bos taurus (Bovine), this protein is Elongation factor Tu, mitochondrial (TUFM).